The following is a 795-amino-acid chain: Lon protease (795 aa).

Residues S7 to L213 enclose the Lon N-terminal domain. An ATP-binding site is contributed by G379–S386. The Lon proteolytic domain maps to V615 to S795. Residues S702 and K745 contribute to the active site.

Belongs to the peptidase S16 family. As to quaternary structure, homohexamer. Organized in a ring with a central cavity.

The protein resides in the cytoplasm. It catalyses the reaction Hydrolysis of proteins in presence of ATP.. Its function is as follows. ATP-dependent serine protease that mediates the selective degradation of mutant and abnormal proteins as well as certain short-lived regulatory proteins. Required for cellular homeostasis and for survival from DNA damage and developmental changes induced by stress. Degrades polypeptides processively to yield small peptide fragments that are 5 to 10 amino acids long. Binds to DNA in a double-stranded, site-specific manner. The protein is Lon protease of Mycoplasma genitalium (strain ATCC 33530 / DSM 19775 / NCTC 10195 / G37) (Mycoplasmoides genitalium).